We begin with the raw amino-acid sequence, 1373 residues long: TAL effector protein PthXo1 (1373 aa).

2 disordered regions span residues 1–68 (MDPI…SAGS) and 127–152 (AARPPRAKPAPRRRAAQPSDASPAAQ). Positions 131 to 141 (PRAKPAPRRRA) are enriched in basic residues. A compositionally biased stretch (low complexity) spans 142–152 (AQPSDASPAAQ). The Cryptic repeat -1 repeat unit spans residues 221–239 (THEDIVGVGKQWSGARALE). One copy of the Cryptic repeat 0 repeat lies at 256-273 (DTGQLVKIAKRGGVTAVE). Core repeat repeat units follow at residues 289–322 (LTPAQVVAIASNNGGKQALETVQRLLPVLCQAHG), 323–356 (LTPAQVVAIASHDGGKQALETMQRLLPVLCQAHG), 357–390 (LPPDQVVAIASNIGGKQALETVQRLLPVLCQAHG), 391–424 (LTPDQVVAIASHGGGKQALETVQRLLPVLCQAHG), 425–458 (LTPDQVVAIASHDGGKQALETVQRLLPVLCQAHG), 459–492 (LTPDQVVAIASNGGGKQALETVQRLLPVLCQAHG), 493–525 (LTPDQVVAIASNGGKQALETVQRLLPVLCQAHG), 526–559 (LTPDQVVAIASHDGGKQALETVQRLLPVLCQTHG), 560–593 (LTPAQVVAIASHDGGKQALETVQQLLPVLCQAHG), 594–627 (LTPDQVVAIASNIGGKQALATVQRLLPVLCQAHG), 628–661 (LTPDQVVAIASNGGGKQALETVQRLLPVLCQAHG), 662–695 (LTPDQVVAIASNGGGKQALETVQRLLPVLCQAHG), 696–729 (LTQVQVVAIASNIGGKQALETVQRLLPVLCQAHG), 730–763 (LTPAQVVAIASHDGGKQALETVQRLLPVLCQAHG), 764–797 (LTPDQVVAIASNGGGKQALETVQRLLPVLCQAHG), 798–831 (LTQEQVVAIASNNGGKQALETVQRLLPVLCQAHG), 832–865 (LTPDQVVAIASNGGGKQALETVQRLLPVLCQAHG), 866–899 (LTPAQVVAIASNIGGKQALETVQRLLPVLCQDHG), 900–933 (LTLAQVVAIASNIGGKQALETVQRLLPVLCQAHG), 934–967 (LTQDQVVAIASNIGGKQALETVQRLLPVLCQDHG), 968–1001 (LTPDQVVAIASNIGGKQALETVQRLLPVLCQDHG), 1002–1034 (LTLDQVVAIASNGGKQALETVQRLLPVLCQDHG), and 1035–1068 (LTPDQVVAIASNSGGKQALETVQRLLPVLCQDHG). HEAT repeat units follow at residues 714–760 (LETV…VLCQ), 782–828 (LETV…VLCQ), 850–893 (LETV…LLPV), and 918–961 (LETV…LLPV). The stretch at 1053–1091 (LETVQRLLPVLCQDHGLTPNQVVAIASNGGKQALESIVA) is one HEAT 5 repeat. One copy of the Core repeat 23.5 repeat lies at 1069 to 1087 (LTPNQVVAIASNGGKQALE). The acidic activation domain stretch occupies residues 1136–1364 (RVNRRIGERT…ELAWLMELLP (229 aa)). The Nuclear localization signal NLS1 signature appears at 1222–1225 (KRAK). Positions 1250-1286 (LDAPSPMHEGDQTGASSRKRSRSDRAVTGPSAQHSFE) are disordered. Positions 1268 to 1271 (KRSR) match the Nuclear localization signal NLS2 motif. Residues 1305 to 1308 (KRPR) carry the Nuclear localization signal NLS3 motif.

The protein belongs to the transcription activator-like effector (TALE) family.

The protein resides in the secreted. It is found in the host nucleus. Its function is as follows. Avirulence protein. Acts as a transcription factor in rice, inducing expression of a number of host genes including SWEET11 (Os8N3, XA13, AC Q6YZF3) in susceptible plants with the Xa13 allele. Plants with the xa13 allele, which has an altered promoter, are resistant to bacterial blight caused by this bacterial strain and do not induce SWEET11. The xa13 allele elicits an atypical hypersensitive response (HR). PthXo1 binds SWEET11 promoter DNA in a sequence-specific manner. In Xanthomonas oryzae pv. oryzae (strain PXO99A), this protein is TAL effector protein PthXo1 (pthXo1).